A 548-amino-acid chain; its full sequence is Probable malate:quinone oxidoreductase (548 aa).

Belongs to the MQO family. FAD serves as cofactor.

The catalysed reaction is (S)-malate + a quinone = a quinol + oxaloacetate. It functions in the pathway carbohydrate metabolism; tricarboxylic acid cycle; oxaloacetate from (S)-malate (quinone route): step 1/1. The sequence is that of Probable malate:quinone oxidoreductase from Escherichia coli O6:H1 (strain CFT073 / ATCC 700928 / UPEC).